A 915-amino-acid polypeptide reads, in one-letter code: Protein translocase subunit SecA (915 aa).

Residues Q87, 105–109 (GEGKT), and D516 contribute to the ATP site. The disordered stretch occupies residues 854–915 (QKMQMRHEQL…KYKNCHGQLE (62 aa)). 4 residues coordinate Zn(2+): C899, C901, C910, and H911.

This sequence belongs to the SecA family. Monomer and homodimer. Part of the essential Sec protein translocation apparatus which comprises SecA, SecYEG and auxiliary proteins SecDF-YajC and YidC. It depends on Zn(2+) as a cofactor.

It localises to the cell inner membrane. The protein localises to the cytoplasm. The enzyme catalyses ATP + H2O + cellular proteinSide 1 = ADP + phosphate + cellular proteinSide 2.. Its function is as follows. Part of the Sec protein translocase complex. Interacts with the SecYEG preprotein conducting channel. Has a central role in coupling the hydrolysis of ATP to the transfer of proteins into and across the cell membrane, serving both as a receptor for the preprotein-SecB complex and as an ATP-driven molecular motor driving the stepwise translocation of polypeptide chains across the membrane. This is Protein translocase subunit SecA from Cellvibrio japonicus (strain Ueda107) (Pseudomonas fluorescens subsp. cellulosa).